A 286-amino-acid polypeptide reads, in one-letter code: Urease accessory protein UreD 2 (286 aa).

Belongs to the UreD family. UreD, UreF and UreG form a complex that acts as a GTP-hydrolysis-dependent molecular chaperone, activating the urease apoprotein by helping to assemble the nickel containing metallocenter of UreC. The UreE protein probably delivers the nickel.

Its subcellular location is the cytoplasm. Its function is as follows. Required for maturation of urease via the functional incorporation of the urease nickel metallocenter. In Bradyrhizobium sp. (strain BTAi1 / ATCC BAA-1182), this protein is Urease accessory protein UreD 2.